A 252-amino-acid chain; its full sequence is MDKRLWVGVVSIFPEMFRAISDYGITSRAVKQGLLTLTCWNPRDYTEDRHQTVDDRPFGGGPGMVMKIKPLEGALADARQAAGGRKAKVIYLSPQGRQLTQAGVRELAEEEALILIAGRYEGIDERFIEEHVDEEWSIGDYVLSGGELPAMVLVDAVTRLLPGALGHADSAEEDSFTDGLLDCPHYTRPEVYADKRVPEVLLSGNHEHIRRWRLQQALGRTWERRADLLDSRSLSGEEQKLLAEYIRQRDDS.

Residues Gly118 and 138-143 (IGDYVL) each bind S-adenosyl-L-methionine.

This sequence belongs to the RNA methyltransferase TrmD family. In terms of assembly, homodimer.

It localises to the cytoplasm. The catalysed reaction is guanosine(37) in tRNA + S-adenosyl-L-methionine = N(1)-methylguanosine(37) in tRNA + S-adenosyl-L-homocysteine + H(+). Its function is as follows. Specifically methylates guanosine-37 in various tRNAs. The protein is tRNA (guanine-N(1)-)-methyltransferase of Pseudomonas paraeruginosa (strain DSM 24068 / PA7) (Pseudomonas aeruginosa (strain PA7)).